A 141-amino-acid chain; its full sequence is NADH dehydrogenase [ubiquinone] 1 alpha subcomplex subunit 11 (141 aa).

An N-acetylalanine modification is found at Ala2. 2 consecutive transmembrane segments (helical) span residues Thr22–Leu43 and Arg58–Val80.

As to quaternary structure, complex I is composed of 45 different subunits.

It is found in the mitochondrion inner membrane. Accessory subunit of the mitochondrial membrane respiratory chain NADH dehydrogenase (Complex I), that is believed not to be involved in catalysis. Complex I functions in the transfer of electrons from NADH to the respiratory chain. The immediate electron acceptor for the enzyme is believed to be ubiquinone. This is NADH dehydrogenase [ubiquinone] 1 alpha subcomplex subunit 11 (NDUFA11) from Bos taurus (Bovine).